The chain runs to 263 residues: Tryptophan synthase alpha chain (263 aa).

Catalysis depends on proton acceptor residues E41 and D52.

This sequence belongs to the TrpA family. In terms of assembly, tetramer of two alpha and two beta chains.

It carries out the reaction (1S,2R)-1-C-(indol-3-yl)glycerol 3-phosphate + L-serine = D-glyceraldehyde 3-phosphate + L-tryptophan + H2O. The protein operates within amino-acid biosynthesis; L-tryptophan biosynthesis; L-tryptophan from chorismate: step 5/5. Its function is as follows. The alpha subunit is responsible for the aldol cleavage of indoleglycerol phosphate to indole and glyceraldehyde 3-phosphate. In Geobacillus sp. (strain WCH70), this protein is Tryptophan synthase alpha chain.